The chain runs to 85 residues: Beta-insect depressant toxin Lqh-dprIT3c (85 aa).

The first 21 residues, 1 to 21, serve as a signal peptide directing secretion; the sequence is MKLLLLLTISASMLIEGLVNA. An LCN-type CS-alpha/beta domain is found at 22 to 82; it reads DGYIRGGDGC…EWDYETNTCG (61 aa). 4 disulfide bridges follow: Cys-31–Cys-81, Cys-35–Cys-56, Cys-42–Cys-63, and Cys-46–Cys-65. Position 82 is a glycine amide (Gly-82).

It belongs to the long (4 C-C) scorpion toxin superfamily. Sodium channel inhibitor family. Beta subfamily. In terms of tissue distribution, expressed by the venom gland.

It is found in the secreted. In terms of biological role, depressant insect beta-toxins cause a transient contraction paralysis followed by a slow flaccid paralysis. They bind voltage-independently at site-4 of sodium channels (Nav) and block action potentials, primarily by depolarizing the axonal membrane and suppressing the sodium current. This depressant toxin is active only on insects. It is found in a relatively small amount in the venom, and its activity on insects is 10-fold higher compared to other known depressant toxins. The sequence is that of Beta-insect depressant toxin Lqh-dprIT3c from Leiurus hebraeus (Hebrew deathstalker scorpion).